The following is a 364-amino-acid chain: Mannose-1-phosphate guanyltransferase (364 aa).

The protein belongs to the transferase hexapeptide repeat family.

It localises to the cytoplasm. The catalysed reaction is alpha-D-mannose 1-phosphate + GTP + H(+) = GDP-alpha-D-mannose + diphosphate. It functions in the pathway nucleotide-sugar biosynthesis; GDP-alpha-D-mannose biosynthesis; GDP-alpha-D-mannose from alpha-D-mannose 1-phosphate (GTP route): step 1/1. Functionally, involved in cell wall synthesis where it is required for glycosylation. Involved in cell cycle progression through cell-size checkpoint. The protein is Mannose-1-phosphate guanyltransferase (mpg-1) of Neurospora crassa (strain ATCC 24698 / 74-OR23-1A / CBS 708.71 / DSM 1257 / FGSC 987).